We begin with the raw amino-acid sequence, 170 residues long: Ribosome maturation factor RimM (170 aa).

The PRC barrel domain occupies 92 to 163 (KEGWYYFELE…RMDVELPPGL (72 aa)).

It belongs to the RimM family. In terms of assembly, binds ribosomal protein uS19.

It localises to the cytoplasm. An accessory protein needed during the final step in the assembly of 30S ribosomal subunit, possibly for assembly of the head region. Essential for efficient processing of 16S rRNA. May be needed both before and after RbfA during the maturation of 16S rRNA. It has affinity for free ribosomal 30S subunits but not for 70S ribosomes. This is Ribosome maturation factor RimM from Desulfitobacterium hafniense (strain Y51).